Reading from the N-terminus, the 163-residue chain is Cytosolic iron-sulfur assembly component 2B (163 aa).

This sequence belongs to the MIP18 family.

The protein resides in the nucleus. It is found in the cytoplasm. It localises to the cytoskeleton. Its subcellular location is the spindle. In terms of biological role, component of the cytosolic iron-sulfur (Fe/S) protein assembly machinery. Required for the maturation of extramitochondrial Fe/S proteins. May play a role in chromosome segregation through establishment of sister chromatid cohesion. The sequence is that of Cytosolic iron-sulfur assembly component 2B from Dictyostelium discoideum (Social amoeba).